A 195-amino-acid chain; its full sequence is Protein GrpE (195 aa).

The segment covering 1-14 (MQEPHDQEPIEKQK) has biased composition (basic and acidic residues). The tract at residues 1–45 (MQEPHDQEPIEKQKLPGMDDVLETEHSGTVAGNTERAGEDAAPSL) is disordered.

The protein belongs to the GrpE family. As to quaternary structure, homodimer.

It is found in the cytoplasm. Its function is as follows. Participates actively in the response to hyperosmotic and heat shock by preventing the aggregation of stress-denatured proteins, in association with DnaK and GrpE. It is the nucleotide exchange factor for DnaK and may function as a thermosensor. Unfolded proteins bind initially to DnaJ; upon interaction with the DnaJ-bound protein, DnaK hydrolyzes its bound ATP, resulting in the formation of a stable complex. GrpE releases ADP from DnaK; ATP binding to DnaK triggers the release of the substrate protein, thus completing the reaction cycle. Several rounds of ATP-dependent interactions between DnaJ, DnaK and GrpE are required for fully efficient folding. The polypeptide is Protein GrpE (Nitrosomonas europaea (strain ATCC 19718 / CIP 103999 / KCTC 2705 / NBRC 14298)).